The chain runs to 950 residues: Protocadherin alpha-1 (950 aa).

A signal peptide spans 1–29; sequence MVFSRRGGLGARDLLLWLLLLAAWEVGSG. 6 consecutive Cadherin domains span residues 30-133, 157-242, 243-350, 351-455, 456-565, and 588-678; these read QLHY…PPVF, AADA…APLF, DQAV…APEL, AVTS…APAF, AQPE…APAL, and GHVV…APKA. Topologically, residues 30-697 are extracellular; sequence QLHYSIPEEA…GPEAALVDVN (668 aa). Residues Asn-257 and Asn-265 are each glycosylated (N-linked (GlcNAc...) asparagine). Asn-548 carries N-linked (GlcNAc...) asparagine glycosylation. Residues 698–718 traverse the membrane as a helical segment; sequence VYLIIAICAVSSLLVLTLLLY. Residues 719 to 950 lie on the Cytoplasmic side of the membrane; that stretch reads TALRCSVPPT…GNSTTDNSDQ (232 aa). 5 PXXP repeats span residues 734-737, 799-802, 832-835, 873-876, and 891-894; these read PGKP, PRQP, PGGP, PGNP, and PGSP. The interval 734–894 is 5 X 4 AA repeats of P-X-X-P; it reads PGKPTLVCSS…PDKFIIPGSP (161 aa). Disordered regions lie at residues 752–808, 828–856, and 871–890; these read QQRR…DWRY, LRAG…EVSP, and YGPG…KFII. The tract at residues 900–950 is disordered; the sequence is RQEPTNSQIDKSDFITFGKKEETKKKKKKKKGNKTQEKKEKGNSTTDNSDQ. A compositionally biased stretch (basic and acidic residues) spans 909–923; it reads DKSDFITFGKKEETK.

The protein resides in the cell membrane. It localises to the secreted. Functionally, potential calcium-dependent cell-adhesion protein. May be involved in the establishment and maintenance of specific neuronal connections in the brain. The chain is Protocadherin alpha-1 (PCDHA1) from Homo sapiens (Human).